The chain runs to 435 residues: Putative FBD-associated F-box protein At5g56820 (435 aa).

An F-box domain is found at 14–60; it reads SDRISYLPDDLLLRILSFIHTSDAISTSLLSKRWKFVWKMMPTLDLD. Residues 341-390 enclose the FBD domain; it reads VRKPNSVPECLTFHLETLEWQGYAGRPEDKEIAVYILGNALRLNTATISR.

The protein is Putative FBD-associated F-box protein At5g56820 of Arabidopsis thaliana (Mouse-ear cress).